The chain runs to 807 residues: Probable phosphoketolase (807 aa).

This sequence belongs to the XFP family. Thiamine diphosphate serves as cofactor.

This Mesorhizobium japonicum (strain LMG 29417 / CECT 9101 / MAFF 303099) (Mesorhizobium loti (strain MAFF 303099)) protein is Probable phosphoketolase.